The primary structure comprises 106 residues: Putative defensin-like protein 224 (106 aa).

A signal peptide spans 1-23 (MKTLSLFFTLVILISSCVSNLMA). Intrachain disulfides connect C60/C78, C64/C84, and C68/C86.

It belongs to the DEFL family.

It is found in the secreted. This Arabidopsis thaliana (Mouse-ear cress) protein is Putative defensin-like protein 224.